Here is a 182-residue protein sequence, read N- to C-terminus: MSPIEQIYDKIPDFAKDVRINLTSLMADETLSPRRKYGVLVASAVATRNSALIAAVESAASGVMTSVAIAAAKAAASVVVMNNVYYRFVHLASNPEYKTMPPRLRMDVIGNPGVDKSDFELWSLAVSSINGCGICIDAHERTLRAAGVNSETIQTAVRFAAITQSVAIALEAAGPASPQAGD.

Residue Cys-132 is the Proton donor of the active site. A disulfide bridge connects residues Cys-132 and Cys-135. Cys-135 serves as the catalytic Cysteine sulfenic acid (-SOH) intermediate.

It belongs to the AhpD family.

It carries out the reaction N(6)-[(R)-dihydrolipoyl]-L-lysyl-[lipoyl-carrier protein] + a hydroperoxide = N(6)-[(R)-lipoyl]-L-lysyl-[lipoyl-carrier protein] + an alcohol + H2O. Functionally, antioxidant protein with alkyl hydroperoxidase activity. Required for the reduction of the AhpC active site cysteine residues and for the regeneration of the AhpC enzyme activity. This Bradyrhizobium diazoefficiens (strain JCM 10833 / BCRC 13528 / IAM 13628 / NBRC 14792 / USDA 110) protein is Alkyl hydroperoxide reductase AhpD.